The chain runs to 519 residues: 2-isopropylmalate synthase (519 aa).

Residues 5–267 form the Pyruvate carboxyltransferase domain; sequence VIIFDTTLRD…QTRINHKEIY (263 aa). Mn(2+) is bound by residues D14, H202, H204, and N238. Residues 392 to 519 are regulatory domain; it reads VMNYFNTQSG…RKHHTTQEAV (128 aa).

This sequence belongs to the alpha-IPM synthase/homocitrate synthase family. LeuA type 1 subfamily. As to quaternary structure, homodimer. It depends on Mn(2+) as a cofactor.

It localises to the cytoplasm. It catalyses the reaction 3-methyl-2-oxobutanoate + acetyl-CoA + H2O = (2S)-2-isopropylmalate + CoA + H(+). The protein operates within amino-acid biosynthesis; L-leucine biosynthesis; L-leucine from 3-methyl-2-oxobutanoate: step 1/4. Catalyzes the condensation of the acetyl group of acetyl-CoA with 3-methyl-2-oxobutanoate (2-ketoisovalerate) to form 3-carboxy-3-hydroxy-4-methylpentanoate (2-isopropylmalate). The sequence is that of 2-isopropylmalate synthase from Proteus mirabilis (strain HI4320).